A 90-amino-acid polypeptide reads, in one-letter code: Small ribosomal subunit protein bS16 (90 aa).

Belongs to the bacterial ribosomal protein bS16 family.

The chain is Small ribosomal subunit protein bS16 from Lactococcus lactis subsp. cremoris (strain SK11).